The primary structure comprises 453 residues: Tubulin delta chain (453 aa).

GTP is bound at residue 143 to 149 (AGGTGSG).

This sequence belongs to the tubulin family. As to quaternary structure, found in a complex with TEDC1, TEDC2, TUBE1 and TUBD1.

It localises to the nucleus. Its subcellular location is the cytoplasm. The protein resides in the cytoskeleton. The protein localises to the microtubule organizing center. It is found in the centrosome. It localises to the centriole. Its subcellular location is the cell projection. The protein resides in the cilium. In terms of biological role, acts as a positive regulator of hedgehog signaling and regulates ciliary function. In Canis lupus familiaris (Dog), this protein is Tubulin delta chain (TUBD1).